We begin with the raw amino-acid sequence, 207 residues long: Urease accessory protein UreG (207 aa).

Residue 14–21 (GPVGSGKT) participates in GTP binding.

Belongs to the SIMIBI class G3E GTPase family. UreG subfamily. Homodimer. UreD, UreF and UreG form a complex that acts as a GTP-hydrolysis-dependent molecular chaperone, activating the urease apoprotein by helping to assemble the nickel containing metallocenter of UreC. The UreE protein probably delivers the nickel.

It localises to the cytoplasm. Its function is as follows. Facilitates the functional incorporation of the urease nickel metallocenter. This process requires GTP hydrolysis, probably effectuated by UreG. The chain is Urease accessory protein UreG from Rhodopseudomonas palustris (strain BisB18).